A 539-amino-acid chain; its full sequence is Protein ENTREP2 (539 aa).

4 helical membrane-spanning segments follow: residues 31–51 (IVLALGATQMALGCLIVAVSF), 65–85 (SCPFWAGFSVLLSGLIGVVSW), 89–109 (LSLVITFFMLLSAVCVMLNLA), and 176–196 (LLFSVCALNVLSTIVCALATA). Residues 301-481 (VVGQPPASQV…TSKERPRSLV (181 aa)) are disordered. Residues 306–331 (PASQVTSIGQQVAESSSGDPNTSAGF) are compositionally biased toward polar residues. Residues 347–365 (GTATPGSSPSPDGPVGAPA) show a composition bias toward low complexity. The segment covering 395–408 (SRSTSDPTLCTSSM) has biased composition (polar residues).

Belongs to the ENTREP family.

The protein localises to the membrane. The protein is Protein ENTREP2 of Homo sapiens (Human).